The chain runs to 409 residues: Failed axon connections homolog (409 aa).

A helical transmembrane segment spans residues 68 to 88 (YLTGGALLAAAAYLLHELLVI). The interval 372–409 (DEGAENSFSRTPDTDFTGHSLFDSDVDMDDYTDHEQCK) is disordered.

The protein belongs to the FAX family.

It is found in the membrane. May play a role in axonal development. In Homo sapiens (Human), this protein is Failed axon connections homolog (FAXC).